A 566-amino-acid polypeptide reads, in one-letter code: NAD-dependent malic enzyme 3 (566 aa).

Catalysis depends on Y105, which acts as the Proton donor. The active-site Proton acceptor is the K178. A divalent metal cation is bound by residues E249, D250, and D273. Residues 306–309 (AGTA), N423, and N468 contribute to the NAD(+) site.

It belongs to the malic enzymes family. Mg(2+) is required as a cofactor. It depends on Mn(2+) as a cofactor.

The catalysed reaction is (S)-malate + NAD(+) = pyruvate + CO2 + NADH. It carries out the reaction oxaloacetate + H(+) = pyruvate + CO2. Its function is as follows. Catalyzes the decarboxylation of malate to pyruvate. Can use NAD and NADP, but with a strong preference for NAD. Can also catalyze the decarboxylation of oxaloacetate. Involved in keeping the ATP levels high. This Bacillus subtilis (strain 168) protein is NAD-dependent malic enzyme 3 (malS).